Consider the following 474-residue polypeptide: ATP synthase subunit beta 2 (474 aa).

An ATP-binding site is contributed by 153-160; the sequence is GGAGVGKT.

It belongs to the ATPase alpha/beta chains family. In terms of assembly, F-type ATPases have 2 components, CF(1) - the catalytic core - and CF(0) - the membrane proton channel. CF(1) has five subunits: alpha(3), beta(3), gamma(1), delta(1), epsilon(1). CF(0) has three main subunits: a(1), b(2) and c(9-12). The alpha and beta chains form an alternating ring which encloses part of the gamma chain. CF(1) is attached to CF(0) by a central stalk formed by the gamma and epsilon chains, while a peripheral stalk is formed by the delta and b chains.

It localises to the cell inner membrane. The catalysed reaction is ATP + H2O + 4 H(+)(in) = ADP + phosphate + 5 H(+)(out). Produces ATP from ADP in the presence of a proton gradient across the membrane. The catalytic sites are hosted primarily by the beta subunits. In Syntrophotalea carbinolica (strain DSM 2380 / NBRC 103641 / GraBd1) (Pelobacter carbinolicus), this protein is ATP synthase subunit beta 2.